The following is a 477-amino-acid chain: Solute carrier family 2, facilitated glucose transporter member 8 (477 aa).

The Cytoplasmic portion of the chain corresponds to 1–25 (MSPEDPQETQPLLRPPEARTPRGRR). Residues 12–13 (LL) carry the Dileucine internalization motif motif. Residues 26–46 (VFLASFAAALGPLSFGFALGY) traverse the membrane as a helical segment. Over 47–70 (SSPAIPSLRRTAPPALRLGDNAAS) the chain is Extracellular. A helical transmembrane segment spans residues 71–91 (WFGAVVTLGAAAGGILGGWLL). Over 92–96 (DRAGR) the chain is Cytoplasmic. A helical membrane pass occupies residues 97 to 117 (KLSLLLCTVPFVTGFAVITAA). Residues 118-127 (RDVWMLLGGR) lie on the Extracellular side of the membrane. A helical transmembrane segment spans residues 128-148 (LLTGLACGVASLVAPVYISEI). Over 149–156 (AYPAVRGL) the chain is Cytoplasmic. The helical transmembrane segment at 157–177 (LGSCVQLMVVTGILLAYVAGW) threads the bilayer. Glutamine 162 contributes to the D-glucose binding site. The Extracellular portion of the chain corresponds to 178-182 (VLEWR). The helical transmembrane segment at 183-203 (WLAVLGCVPPTLMLLLMCYMP) threads the bilayer. Over 204–257 (ETPRFLLTQHQYQEAMAALRFLWGSEEGWEEPPVGAEHQGFQLALLRRPGIYKP) the chain is Cytoplasmic. Residues 258–278 (LIIGISLMVFQQLSGVNAIMF) form a helical membrane-spanning segment. Residues 268-269 (QQ) and asparagine 274 each bind D-glucose. The Extracellular segment spans residues 279–293 (YANSIFEEAKFKDSS). Residues 294–314 (LASVTVGIIQVLFTAVAALIM) traverse the membrane as a helical segment. Residues 315 to 320 (DRAGRR) lie on the Cytoplasmic side of the membrane. A helical membrane pass occupies residues 321 to 341 (LLLALSGVIMVFSMSAFGTYF). At 342-367 (KLTQSLPSNSSHVGLVPIAAEPVDVQ) the chain is on the extracellular side. The N-linked (GlcNAc...) asparagine glycan is linked to asparagine 350. The helical transmembrane segment at 368–388 (VGLAWLAVGSMCLFIAGFAVG) threads the bilayer. The Cytoplasmic segment spans residues 389 to 404 (WGPIPWLLMSEIFPLH). Tryptophan 394 is a binding site for D-glucose. A helical membrane pass occupies residues 405–425 (VKGVATGICVLTNWFMAFLVT). Over 426–438 (KEFSSVMEMLRPY) the chain is Extracellular. Residues 439-459 (GAFWLTAAFCALSVLFTLTVV) traverse the membrane as a helical segment. Topologically, residues 460-477 (PETKGRTLEQVTAHFEGR) are cytoplasmic.

It belongs to the major facilitator superfamily. Sugar transporter (TC 2.A.1.1) family. Glucose transporter subfamily. As to quaternary structure, interacts with AP2B1. Also able to mediate the transport of dehydroascorbate. In terms of tissue distribution, highest level of expression in placenta and testis. Highly expressed in adult and pubertal testis, but not prepubertal testis. Lower levels of expression in brain, liver, heart, kidney, fat and skeletal muscle.

The protein resides in the cell membrane. The protein localises to the cytoplasmic vesicle membrane. It catalyses the reaction D-glucose(out) = D-glucose(in). The enzyme catalyses D-fructose(out) = D-fructose(in). It carries out the reaction L-dehydroascorbate(out) = L-dehydroascorbate(in). The catalysed reaction is alpha,alpha-trehalose(in) = alpha,alpha-trehalose(out). Inhibited by cytochalasin B. Functionally, insulin-regulated facilitative hexose transporter that mediates the transport of glucose and fructose. Facilitates hepatic influx of dietary trehalose, which in turn inhibits glucose and fructose influx triggering a starvation signal and hepatic autophagy through activation of AMPK and ULK1. Also able to mediate the transport of dehydroascorbate. The protein is Solute carrier family 2, facilitated glucose transporter member 8 of Mus musculus (Mouse).